The sequence spans 357 residues: DNA integrity scanning protein DisA (357 aa).

Residues 8–146 (VKSMINILQL…GNLRYTLKDI (139 aa)) form the DAC domain. Residues Gly75, Leu93, and 106–110 (MRHRT) each bind ATP.

This sequence belongs to the DisA family. As to quaternary structure, homooctamer. The cofactor is Mg(2+).

It carries out the reaction 2 ATP = 3',3'-c-di-AMP + 2 diphosphate. Participates in a DNA-damage check-point that is active prior to asymmetric division when DNA is damaged. DisA forms globular foci that rapidly scan along the chromosomes during sporulation, searching for lesions. When a lesion is present, DisA pauses at the lesion site. This triggers a cellular response that culminates in a temporary block in sporulation initiation. Functionally, also has diadenylate cyclase activity, catalyzing the condensation of 2 ATP molecules into cyclic di-AMP (c-di-AMP). c-di-AMP acts as a signaling molecule that couples DNA integrity with progression of sporulation. The rise in c-di-AMP level generated by DisA while scanning the chromosome, operates as a positive signal that advances sporulation; upon encountering a lesion, the DisA focus arrests at the damaged site and halts c-di-AMP synthesis. The chain is DNA integrity scanning protein DisA from Bacillus anthracis (strain CDC 684 / NRRL 3495).